The sequence spans 412 residues: NAD-dependent dihydropyrimidine dehydrogenase subunit PreT (412 aa).

Glu-286 lines the NAD(+) pocket.

It belongs to the NADH dehydrogenase family. Heterotetramer of 2 PreA and 2 PreT subunits.

It catalyses the reaction 5,6-dihydrouracil + NAD(+) = uracil + NADH + H(+). The enzyme catalyses 5,6-dihydrothymine + NAD(+) = thymine + NADH + H(+). Involved in pyrimidine base degradation. Catalyzes physiologically the reduction of uracil to 5,6-dihydrouracil (DHU) by using NADH as a specific cosubstrate. It also catalyzes the reverse reaction and the reduction of thymine to 5,6-dihydrothymine (DHT). The polypeptide is NAD-dependent dihydropyrimidine dehydrogenase subunit PreT (preT) (Escherichia coli O157:H7).